Consider the following 143-residue polypeptide: D-aminoacyl-tRNA deacylase (143 aa).

The Gly-cisPro motif, important for rejection of L-amino acids signature appears at 135-136 (GP).

This sequence belongs to the DTD family. Homodimer.

Its subcellular location is the cytoplasm. It catalyses the reaction glycyl-tRNA(Ala) + H2O = tRNA(Ala) + glycine + H(+). It carries out the reaction a D-aminoacyl-tRNA + H2O = a tRNA + a D-alpha-amino acid + H(+). In terms of biological role, an aminoacyl-tRNA editing enzyme that deacylates mischarged D-aminoacyl-tRNAs. Also deacylates mischarged glycyl-tRNA(Ala), protecting cells against glycine mischarging by AlaRS. Acts via tRNA-based rather than protein-based catalysis; rejects L-amino acids rather than detecting D-amino acids in the active site. By recycling D-aminoacyl-tRNA to D-amino acids and free tRNA molecules, this enzyme counteracts the toxicity associated with the formation of D-aminoacyl-tRNA entities in vivo and helps enforce protein L-homochirality. This chain is D-aminoacyl-tRNA deacylase, found in Mycolicibacterium smegmatis (strain ATCC 700084 / mc(2)155) (Mycobacterium smegmatis).